A 403-amino-acid chain; its full sequence is MGKVWKQQMYPQYATYYYPQYLQAKQSLVPAHPMAPPSPSTTSSNNNSSSSSNSGWDQLSKTNLYIRGLPPNTTDQDLVKLCQPYGKIVSTKAILDKTTNKCKGYGFVDFDSPAAAQKAVSALKASGVQAQMAKQQEQDPTNLYISNLPLSMDEQELENMLKPFGQVISTRILRDSSGTSRGVGFARMESTEKCEAVIGHFNGKFIKTPPGVSAPTEPLLCKFADGGQKKRQNPNKYIPNGRPWHREGEAGMTLTYDPTTAAIQNGFYPSPYSIATNRMITQTSITPYIASPVSAYQVQSPSWMQPQPYILQHPGAVLTPSMEHTMSLQPASMISPLAQQMSHLSLGSTGTYMPATSAMQGAYLPQYTHVQTAAVPVEEASGQQQVTVETSNDHSPYTFQPNK.

A disordered region spans residues 30–56; the sequence is PAHPMAPPSPSTTSSNNNSSSSSNSGW. Residues 40–54 are compositionally biased toward low complexity; the sequence is STTSSNNNSSSSSNS. RRM domains follow at residues 62 to 135 and 141 to 226; these read TNLY…MAKQ and TNLY…FADG. A Phosphothreonine modification is found at T208.

Its subcellular location is the nucleus. In terms of biological role, single-stranded DNA binding protein that interacts with the region upstream of the C-myc gene. Binds specifically to the DNA sequence motif 5'-[AT]CT[AT][AT]T-3'. Probably has a role in DNA replication. In Bos taurus (Bovine), this protein is RNA-binding motif, single-stranded-interacting protein 1 (RBMS1).